The following is a 452-amino-acid chain: Phosphoglucosamine mutase 2 (452 aa).

The active-site Phosphoserine intermediate is the S101. Mg(2+)-binding residues include S101, D245, D247, and D249. Phosphoserine is present on S101.

The protein belongs to the phosphohexose mutase family. Mg(2+) is required as a cofactor. In terms of processing, activated by phosphorylation.

The enzyme catalyses alpha-D-glucosamine 1-phosphate = D-glucosamine 6-phosphate. Catalyzes the conversion of glucosamine-6-phosphate to glucosamine-1-phosphate. In Shewanella amazonensis (strain ATCC BAA-1098 / SB2B), this protein is Phosphoglucosamine mutase 2.